A 434-amino-acid chain; its full sequence is Histidinol dehydrogenase (434 aa).

Residues tyrosine 130, glutamine 188, and asparagine 211 each coordinate NAD(+). Residues serine 237, glutamine 259, and histidine 262 each coordinate substrate. Positions 259 and 262 each coordinate Zn(2+). Catalysis depends on proton acceptor residues glutamate 326 and histidine 327. Residues histidine 327, aspartate 360, glutamate 414, and histidine 419 each contribute to the substrate site. Aspartate 360 serves as a coordination point for Zn(2+). Histidine 419 is a binding site for Zn(2+).

It belongs to the histidinol dehydrogenase family. Homodimer. Zn(2+) serves as cofactor.

It catalyses the reaction L-histidinol + 2 NAD(+) + H2O = L-histidine + 2 NADH + 3 H(+). It participates in amino-acid biosynthesis; L-histidine biosynthesis; L-histidine from 5-phospho-alpha-D-ribose 1-diphosphate: step 9/9. Its function is as follows. Catalyzes the sequential NAD-dependent oxidations of L-histidinol to L-histidinaldehyde and then to L-histidine. The polypeptide is Histidinol dehydrogenase (Escherichia coli O157:H7).